Consider the following 474-residue polypeptide: 6-phospho-beta-glucosidase AscB (474 aa).

The active-site Proton donor is glutamate 180. Glutamate 372 serves as the catalytic Nucleophile.

Belongs to the glycosyl hydrolase 1 family.

It catalyses the reaction 6-phospho-beta-D-glucosyl-(1-&gt;4)-D-glucose + H2O = D-glucose 6-phosphate + D-glucose. In terms of biological role, can hydrolyze salicin, cellobiose, and probably arbutin. The polypeptide is 6-phospho-beta-glucosidase AscB (ascB) (Escherichia coli (strain K12)).